A 305-amino-acid polypeptide reads, in one-letter code: Ribonuclease BN (305 aa).

Zn(2+)-binding residues include H64, H66, D68, H69, H141, D212, and H270. D68 (proton acceptor) is an active-site residue.

This sequence belongs to the RNase Z family. RNase BN subfamily. In terms of assembly, homodimer. Requires Zn(2+) as cofactor.

Functionally, zinc phosphodiesterase, which has both exoribonuclease and endoribonuclease activities. In Escherichia coli O157:H7, this protein is Ribonuclease BN.